The sequence spans 382 residues: D-galactonate dehydratase (382 aa).

Residue D183 coordinates Mg(2+). The active-site Proton donor is the H185. Mg(2+) is bound by residues E209 and E235. The Proton acceptor role is filled by H285.

The protein belongs to the mandelate racemase/muconate lactonizing enzyme family. GalD subfamily. It depends on Mg(2+) as a cofactor.

The catalysed reaction is D-galactonate = 2-dehydro-3-deoxy-D-galactonate + H2O. It participates in carbohydrate acid metabolism; D-galactonate degradation; D-glyceraldehyde 3-phosphate and pyruvate from D-galactonate: step 1/3. Catalyzes the dehydration of D-galactonate to 2-keto-3-deoxy-D-galactonate. This chain is D-galactonate dehydratase, found in Pectobacterium atrosepticum (strain SCRI 1043 / ATCC BAA-672) (Erwinia carotovora subsp. atroseptica).